A 652-amino-acid chain; its full sequence is uncharacterized protein (652 aa).

Composition is skewed to basic and acidic residues over residues 1-13 (MSVT…TERK) and 641-652 (ATERTDNLADAA). 2 disordered regions span residues 1-21 (MSVT…PAKT) and 628-652 (VPGW…ADAA).

This sequence belongs to the ParB family.

This is an uncharacterized protein from Escherichia coli O157:H7.